A 207-amino-acid chain; its full sequence is Ribonuclease HII (207 aa).

Positions 18 to 206 (EFIVGVDEVG…VKNILQLLEK (189 aa)) constitute an RNase H type-2 domain. Residues Asp-24, Glu-25, and Asp-115 each contribute to the a divalent metal cation site.

This sequence belongs to the RNase HII family. Mn(2+) serves as cofactor. Requires Mg(2+) as cofactor.

It localises to the cytoplasm. It catalyses the reaction Endonucleolytic cleavage to 5'-phosphomonoester.. Its function is as follows. Endonuclease that specifically degrades the RNA of RNA-DNA hybrids. This is Ribonuclease HII from Hydrogenovibrio crunogenus (strain DSM 25203 / XCL-2) (Thiomicrospira crunogena).